The sequence spans 357 residues: Peptide chain release factor 1 (357 aa).

Residue Q232 is modified to N5-methylglutamine. The segment covering 284-304 (AERAAERKGQIGSGDRSERIR) has biased composition (basic and acidic residues). The interval 284–308 (AERAAERKGQIGSGDRSERIRTYNY) is disordered.

The protein belongs to the prokaryotic/mitochondrial release factor family. Post-translationally, methylated by PrmC. Methylation increases the termination efficiency of RF1.

Its subcellular location is the cytoplasm. Its function is as follows. Peptide chain release factor 1 directs the termination of translation in response to the peptide chain termination codons UAG and UAA. In Maricaulis maris (strain MCS10) (Caulobacter maris), this protein is Peptide chain release factor 1.